The following is a 561-amino-acid chain: uncharacterized protein (561 aa).

6 helical membrane-spanning segments follow: residues 27–49 (ILEF…GLLI), 54–71 (FFGI…ALAL), 83–105 (LVYQ…SEFF), 115–137 (LTLF…IKLF), 142–162 (IIGA…AAMV), and 177–199 (VVGY…AIGA). In terms of domain architecture, RCK C-terminal spans 292–373 (QQDVPIEDTD…MSEVRRFLGD (82 aa)). The next 4 helical transmembrane spans lie at 383-405 (LMPF…PLPG), 409-428 (LSLG…GALN), 441-463 (ASRT…SAGV), and 478-500 (IAGG…MPLF).

Belongs to the AAE transporter (TC 2.A.81) family.

It localises to the cell membrane. This is an uncharacterized protein from Corynebacterium diphtheriae (strain ATCC 700971 / NCTC 13129 / Biotype gravis).